The primary structure comprises 385 residues: 4-hydroxy-3-methylbut-2-en-1-yl diphosphate synthase (flavodoxin) 2 (385 aa).

Positions 280, 283, 315, and 322 each coordinate [4Fe-4S] cluster.

This sequence belongs to the IspG family. Requires [4Fe-4S] cluster as cofactor.

The catalysed reaction is (2E)-4-hydroxy-3-methylbut-2-enyl diphosphate + oxidized [flavodoxin] + H2O + 2 H(+) = 2-C-methyl-D-erythritol 2,4-cyclic diphosphate + reduced [flavodoxin]. It participates in isoprenoid biosynthesis; isopentenyl diphosphate biosynthesis via DXP pathway; isopentenyl diphosphate from 1-deoxy-D-xylulose 5-phosphate: step 5/6. Functionally, converts 2C-methyl-D-erythritol 2,4-cyclodiphosphate (ME-2,4cPP) into 1-hydroxy-2-methyl-2-(E)-butenyl 4-diphosphate. The polypeptide is 4-hydroxy-3-methylbut-2-en-1-yl diphosphate synthase (flavodoxin) 2 (Streptomyces coelicolor (strain ATCC BAA-471 / A3(2) / M145)).